Here is a 377-residue protein sequence, read N- to C-terminus: Prolargin (377 aa).

The N-terminal stretch at methionine 1 to glycine 21 is a signal peptide. The segment at glutamine 22–proline 61 is disordered. Composition is skewed to pro residues over residues arginine 36–histidine 45 and aspartate 52–proline 61. 12 LRR repeats span residues arginine 90 to isoleucine 109, threonine 110 to isoleucine 133, arginine 134 to leucine 157, glutamate 158 to isoleucine 178, serine 179 to leucine 202, serine 203 to leucine 228, arginine 229 to isoleucine 249, glutamate 250 to leucine 273, serine 274 to isoleucine 298, serine 299 to isoleucine 318, glutamate 319 to leucine 357, and lysine 358 to isoleucine 377. Residue asparagine 119 is glycosylated (N-linked (GlcNAc...) asparagine). N-linked (GlcNAc...) asparagine glycosylation is found at asparagine 284, asparagine 315, and asparagine 322. A disulfide bond links cysteine 327 and cysteine 368.

This sequence belongs to the small leucine-rich proteoglycan (SLRP) family. SLRP class II subfamily. Binds the basement membrane heparan sulfate proteoglycan perlecan and triple helical collagens type I and type II. Glycosylated; contains heparan sulfate.

Its subcellular location is the secreted. The protein localises to the extracellular space. It is found in the extracellular matrix. May anchor basement membranes to the underlying connective tissue. This chain is Prolargin (Prelp), found in Rattus norvegicus (Rat).